A 186-amino-acid polypeptide reads, in one-letter code: tRNA (cytidine(56)-2'-O)-methyltransferase (186 aa).

Residues Leu-84 and 110–114 (GAEKV) each bind S-adenosyl-L-methionine.

The protein belongs to the aTrm56 family. Homodimer.

The protein resides in the cytoplasm. It carries out the reaction cytidine(56) in tRNA + S-adenosyl-L-methionine = 2'-O-methylcytidine(56) in tRNA + S-adenosyl-L-homocysteine + H(+). Functionally, specifically catalyzes the AdoMet-dependent 2'-O-ribose methylation of cytidine at position 56 in tRNAs. The polypeptide is tRNA (cytidine(56)-2'-O)-methyltransferase (Staphylothermus marinus (strain ATCC 43588 / DSM 3639 / JCM 9404 / F1)).